A 160-amino-acid chain; its full sequence is Bcl-2-like gene 16 protein (160 aa).

A BH1 motif is present at residues 64-84; that stretch reads LLTTEHTTNWGKVVAMLSFSA.

Belongs to the Bcl-2 family.

The sequence is that of Bcl-2-like gene 16 protein (16) from Saimiri sciureus (Common squirrel monkey).